The sequence spans 629 residues: tRNA uridine 5-carboxymethylaminomethyl modification enzyme MnmG (629 aa).

13–18 (GGGHAG) provides a ligand contact to FAD. Residue 273–287 (GPRYCPSIEDKVVRF) coordinates NAD(+).

Belongs to the MnmG family. In terms of assembly, homodimer. Heterotetramer of two MnmE and two MnmG subunits. Requires FAD as cofactor.

The protein localises to the cytoplasm. Its function is as follows. NAD-binding protein involved in the addition of a carboxymethylaminomethyl (cmnm) group at the wobble position (U34) of certain tRNAs, forming tRNA-cmnm(5)s(2)U34. The chain is tRNA uridine 5-carboxymethylaminomethyl modification enzyme MnmG from Alkalilimnicola ehrlichii (strain ATCC BAA-1101 / DSM 17681 / MLHE-1).